Reading from the N-terminus, the 395-residue chain is Flap endonuclease 1 (395 aa).

The segment at 1 to 104 (MGIKHLYQII…GELAKRFMRK (104 aa)) is N-domain. A Mg(2+)-binding site is contributed by Asp-34. Residues Arg-47 and Arg-70 each coordinate DNA. Mg(2+)-binding residues include Asp-86, Glu-158, Glu-160, Asp-179, and Asp-181. The I-domain stretch occupies residues 122–253 (EVEKFSRRTV…NTALKLIRDH (132 aa)). Position 158 (Glu-158) interacts with DNA. DNA-binding residues include Gly-231 and Asp-233. Asp-233 serves as a coordination point for Mg(2+). Positions 341–349 (QQSRLEGFF) are interaction with PCNA. The segment covering 360-389 (AVLKRKHEEKLELQKKKKKEDSKAKKEAKS) has biased composition (basic and acidic residues). A disordered region spans residues 360-395 (AVLKRKHEEKLELQKKKKKEDSKAKKEAKSKPRGTT).

The protein belongs to the XPG/RAD2 endonuclease family. FEN1 subfamily. Interacts with PCNA. Three molecules of FEN1 bind to one PCNA trimer with each molecule binding to one PCNA monomer. PCNA stimulates the nuclease activity without altering cleavage specificity. Mg(2+) is required as a cofactor. Phosphorylated. Phosphorylation upon DNA damage induces relocalization to the nuclear plasma.

The protein resides in the nucleus. It localises to the nucleolus. Its subcellular location is the nucleoplasm. It is found in the mitochondrion. Its function is as follows. Structure-specific nuclease with 5'-flap endonuclease and 5'-3' exonuclease activities involved in DNA replication and repair. During DNA replication, cleaves the 5'-overhanging flap structure that is generated by displacement synthesis when DNA polymerase encounters the 5'-end of a downstream Okazaki fragment. It enters the flap from the 5'-end and then tracks to cleave the flap base, leaving a nick for ligation. Also involved in the long patch base excision repair (LP-BER) pathway, by cleaving within the apurinic/apyrimidinic (AP) site-terminated flap. Acts as a genome stabilization factor that prevents flaps from equilibrating into structures that lead to duplications and deletions. Also possesses 5'-3' exonuclease activity on nicked or gapped double-stranded DNA, and exhibits RNase H activity. Also involved in replication and repair of rDNA and in repairing mitochondrial DNA. This is Flap endonuclease 1 from Ajellomyces capsulatus (strain H143) (Darling's disease fungus).